The chain runs to 92 residues: Small integral membrane protein 12 (92 aa).

Residues 15–34 form a helical membrane-spanning segment; sequence YVTFPVAFVVGAVGYHLEWF.

The protein belongs to the SMIM12 family.

It is found in the membrane. The sequence is that of Small integral membrane protein 12 (Smim12) from Mus musculus (Mouse).